A 151-amino-acid polypeptide reads, in one-letter code: UPF0208 membrane protein ESA_00924 (151 aa).

2 helical membrane-spanning segments follow: residues 46–65 and 69–91; these read FAIRIMPPVAVFTLCWQIAL and LGPAVATALFALSMPMQGLWWLG.

This sequence belongs to the UPF0208 family.

It localises to the cell inner membrane. The sequence is that of UPF0208 membrane protein ESA_00924 from Cronobacter sakazakii (strain ATCC BAA-894) (Enterobacter sakazakii).